The following is a 378-amino-acid chain: Circumsporozoite protein (378 aa).

Residues 1-22 (MKNFNLLVVSSILLVDLFPTNC) form the signal peptide. Residues 50-288 (AQVRQSASRG…AGAGQGQNNE (239 aa)) form a disordered region. Positions 65-93 (NPKDEEGADKPKKKEEKKVEPKKPRENKL) are enriched in basic and acidic residues. Residues 81–89 (KKVEPKKPR) are required for the binding to heparan sulfate proteoglycans (HSPGs) on the surface of host hepatocytes. A region I; contains the proteolytic cleavage site region spans residues 92 to 96 (KLKQP). Low complexity predominate over residues 96–203 (PPAGDGAPEG…RAGGQPAAGG (108 aa)). The 1-1; truncated repeat unit spans residues 97–102 (PAGDGA). Residues 97-191 (PAGDGAPEGD…AAPAGDGAPA (95 aa)) form an 11 X 9 AA tandem repeats of P-[AE]-G-D-G-A-P-A-[AG] region. Tandem repeats lie at residues 103–111 (PEGDGAPAA), 112–120 (PAGDGAPAA), 121–129 (PAGDGAPAA), 130–138 (PAGDGAPAA), 139–147 (PAGDGAPAA), 148–156 (PAGDGAPAA), 157–165 (PAGDGAPAA), 166–174 (PAGDGAPAA), 175–183 (PAGDGAPAA), 184–191 (PAGDGAPA), 193–208 (NRAG…QAGG), 209–224 (NRAG…QAGG), and 225–240 (NRAG…QAGG). The 6 X 16 AA approximate tandem repeats of N-R-A-G-G-Q-P-A-A-G-G-N-Q-A-G-G stretch occupies residues 193–268 (NRAGGQPAAG…GAQAGGANAG (76 aa)). Over residues 228-251 (GGQPAAGGNQAGGQPAAGGNQAGA) the composition is skewed to low complexity. One copy of the 2-4; approximate; truncated repeat lies at 241 to 251 (QPAAGGNQAGA). Residues 252-260 (QAGGNQAGA) form a 2-5; approximate; truncated repeat. Gly residues-rich tracts occupy residues 252–266 (QAGG…GGAN) and 274–283 (EAGGNAGAGQ). Residues 261 to 268 (QAGGANAG) form a 2-6; approximate; truncated repeat. One can recognise a TSP type-1 domain in the interval 304–356 (KIRSTLGVEWSPCSVTCGKGVRMRRKVSAANKKPEELDVNDLETEVCTMDKCA). Intrachain disulfides connect C316–C350 and C320–C355. A glycan (O-linked (Fuc) threonine) is linked at T319. The GPI-anchor amidated cysteine moiety is linked to residue C355. The propeptide at 356–378 (AGIFNVVSNSLRLVILLVLALFN) is removed in mature form.

The protein belongs to the plasmodium circumsporozoite protein family. During host cell invasion, proteolytically cleaved at the cell membrane in the region I by a papain-like cysteine protease of parasite origin. Cleavage is triggered by the sporozoite contact with highly sulfated heparan sulfate proteoglycans (HSPGs) present on the host hepatocyte cell surface. Cleavage exposes the TSP type-1 (TSR) domain and is required for productive invasion of host hepatocytes but not for adhesion to the host cell membrane. Cleavage is dispensable for sporozoite development in the oocyst, motility and for traversal of host and vector cells. Post-translationally, O-glycosylated; maybe by POFUT2.

The protein resides in the cell membrane. Its subcellular location is the cytoplasm. Its function is as follows. Essential sporozoite protein. In the mosquito vector, required for sporozoite development in the oocyst, migration through the vector hemolymph and entry into the vector salivary glands. In the vertebrate host, required for sporozoite migration through the host dermis and infection of host hepatocytes. Binds to highly sulfated heparan sulfate proteoglycans (HSPGs) on the surface of host hepatocytes. In the vertebrate host, binds to highly sulfated heparan sulfate proteoglycans (HSPGs) on the surface of host hepatocytes and is required for sporozoite invasion of the host hepatocytes. The sequence is that of Circumsporozoite protein from Plasmodium cynomolgi (strain Berok).